A 387-amino-acid polypeptide reads, in one-letter code: Phosphoglycerate kinase (387 aa).

Substrate contacts are provided by residues 21–23, R36, 59–62, R113, and R146; these read DLN and HLGR. ATP-binding positions include K197, E314, and 340–343; that span reads GGDT.

The protein belongs to the phosphoglycerate kinase family. In terms of assembly, monomer.

It is found in the cytoplasm. It catalyses the reaction (2R)-3-phosphoglycerate + ATP = (2R)-3-phospho-glyceroyl phosphate + ADP. Its pathway is carbohydrate degradation; glycolysis; pyruvate from D-glyceraldehyde 3-phosphate: step 2/5. This chain is Phosphoglycerate kinase (pgk), found in Pasteurella multocida (strain Pm70).